The sequence spans 450 residues: Tubulin alpha-1 chain (450 aa).

Gln-11 provides a ligand contact to GTP. The residue at position 40 (Lys-40) is an N6-acetyllysine. Residues Glu-71, Ser-140, Gly-144, Thr-145, Thr-179, Asn-206, and Asn-228 each contribute to the GTP site. A Mg(2+)-binding site is contributed by Glu-71. The active site involves Glu-254.

The protein belongs to the tubulin family. As to quaternary structure, dimer of alpha and beta chains. A typical microtubule is a hollow water-filled tube with an outer diameter of 25 nm and an inner diameter of 15 nM. Alpha-beta heterodimers associate head-to-tail to form protofilaments running lengthwise along the microtubule wall with the beta-tubulin subunit facing the microtubule plus end conferring a structural polarity. Microtubules usually have 13 protofilaments but different protofilament numbers can be found in some organisms and specialized cells. Interacts with Ote. Mg(2+) is required as a cofactor. In terms of processing, undergoes a tyrosination/detyrosination cycle, the cyclic removal and re-addition of a C-terminal tyrosine residue by the enzymes tubulin tyrosine carboxypeptidase (TTCP) and tubulin tyrosine ligase (TTL), respectively. Acetylation of alpha chains at Lys-40 stabilizes microtubules and affects affinity and processivity of microtubule motors. This modification has a role in multiple cellular functions, ranging from cell motility, cell cycle progression or cell differentiation to intracellular trafficking and signaling. During the early stages of oogenesis lky/Alpha-tubulin N-acetyltransferase 2 is the main acetyltransferase responsible for Lys-40 acetylation in germline cells while Atat/alpha-tubulin N-acetyltransferase 1 is the main acetyltransferase responsible for Lys-40 acetylation in somatic cells.

The protein localises to the cytoplasm. The protein resides in the cytoskeleton. The catalysed reaction is GTP + H2O = GDP + phosphate + H(+). Functionally, tubulin is the major constituent of microtubules, a cylinder consisting of laterally associated linear protofilaments composed of alpha- and beta-tubulin heterodimers. Microtubules grow by the addition of GTP-tubulin dimers to the microtubule end, where a stabilizing cap forms. Below the cap, tubulin dimers are in GDP-bound state, owing to GTPase activity of alpha-tubulin. This Drosophila melanogaster (Fruit fly) protein is Tubulin alpha-1 chain (alphaTub84B).